The chain runs to 65 residues: Large ribosomal subunit protein bL35 (65 aa).

The protein belongs to the bacterial ribosomal protein bL35 family.

The polypeptide is Large ribosomal subunit protein bL35 (Blochmanniella pennsylvanica (strain BPEN)).